The sequence spans 333 residues: Phosphoribosylformylglycinamidine cyclo-ligase (333 aa).

It belongs to the AIR synthase family.

It localises to the cytoplasm. It catalyses the reaction 2-formamido-N(1)-(5-O-phospho-beta-D-ribosyl)acetamidine + ATP = 5-amino-1-(5-phospho-beta-D-ribosyl)imidazole + ADP + phosphate + H(+). The protein operates within purine metabolism; IMP biosynthesis via de novo pathway; 5-amino-1-(5-phospho-D-ribosyl)imidazole from N(2)-formyl-N(1)-(5-phospho-D-ribosyl)glycinamide: step 2/2. The protein is Phosphoribosylformylglycinamidine cyclo-ligase of Methanosarcina acetivorans (strain ATCC 35395 / DSM 2834 / JCM 12185 / C2A).